Consider the following 787-residue polypeptide: (-)-kolavenyl diphosphate synthase, chloroplastic (787 aa).

The transit peptide at 1 to 47 directs the protein to the chloroplast; the sequence is MSFATSLPRPTTTGAAGFGLPLATCISLSVSHSFSPKFGICNNTSLR. Residue lysine 237 participates in substrate binding. Mg(2+) contacts are provided by aspartate 368 and aspartate 370. A DXDD motif motif is present at residues 368–371; that stretch reads DSDD. Lysine 454 lines the substrate pocket.

This sequence belongs to the terpene synthase family. Tpsc subfamily. It depends on Mg(2+) as a cofactor. Expressed in peltate glandular trichomes of leaves. Highly expressed in the first leaf pair.

The protein resides in the plastid. Its subcellular location is the chloroplast. It carries out the reaction (2E,6E,10E)-geranylgeranyl diphosphate = (-)-kolavenyl diphosphate. Inhibited by high concentrations of magnesium. Its function is as follows. Involved in the biosynthesis of clerodane diterpenoids natural products, including salvinorin A with potent agonistic activity on brain kappa-opioid receptors, thus conferring hallucinogenic properties. Diterpene synthase that catalyzes the formation of (-)-kolavenyl diphosphate from geranylgeranyl diphosphate (GGPP) as the first reaction in salvinorin A biosynthesis. This chain is (-)-kolavenyl diphosphate synthase, chloroplastic, found in Salvia divinorum (Maria pastora).